A 185-amino-acid polypeptide reads, in one-letter code: Ribosome-recycling factor (185 aa).

Belongs to the RRF family.

The protein localises to the cytoplasm. Functionally, responsible for the release of ribosomes from messenger RNA at the termination of protein biosynthesis. May increase the efficiency of translation by recycling ribosomes from one round of translation to another. The protein is Ribosome-recycling factor of Sulfurovum sp. (strain NBC37-1).